The chain runs to 437 residues: tRNA-2-methylthio-N(6)-dimethylallyladenosine synthase (437 aa).

The MTTase N-terminal domain maps to 1–115 (MKVYIETMGC…ISQVIHKEKA (115 aa)). [4Fe-4S] cluster is bound by residues Cys10, Cys46, Cys78, Cys148, Cys152, and Cys155. One can recognise a Radical SAM core domain in the interval 134 to 367 (KKAQIRSLLN…QNRHKEILEE (234 aa)). The 67-residue stretch at 370-436 (KLEVGKTHVV…KGRLMATTKG (67 aa)) folds into the TRAM domain.

Belongs to the methylthiotransferase family. MiaB subfamily. Monomer. [4Fe-4S] cluster is required as a cofactor.

It is found in the cytoplasm. It carries out the reaction N(6)-dimethylallyladenosine(37) in tRNA + (sulfur carrier)-SH + AH2 + 2 S-adenosyl-L-methionine = 2-methylsulfanyl-N(6)-dimethylallyladenosine(37) in tRNA + (sulfur carrier)-H + 5'-deoxyadenosine + L-methionine + A + S-adenosyl-L-homocysteine + 2 H(+). Catalyzes the methylthiolation of N6-(dimethylallyl)adenosine (i(6)A), leading to the formation of 2-methylthio-N6-(dimethylallyl)adenosine (ms(2)i(6)A) at position 37 in tRNAs that read codons beginning with uridine. The polypeptide is tRNA-2-methylthio-N(6)-dimethylallyladenosine synthase (Helicobacter pylori (strain G27)).